The following is a 294-amino-acid chain: Tryptophan 2,3-dioxygenase 1 (294 aa).

Positions 1 to 20 (MSEPIQPTRPAASGCPMHGA) are disordered. Substrate contacts are provided by residues 63–67 (FIVQH), tyrosine 125, and arginine 129. Heme is bound at residue histidine 252. Residue threonine 266 participates in substrate binding.

Belongs to the tryptophan 2,3-dioxygenase family. In terms of assembly, homotetramer. The cofactor is heme.

It catalyses the reaction L-tryptophan + O2 = N-formyl-L-kynurenine. It functions in the pathway amino-acid degradation; L-tryptophan degradation via kynurenine pathway; L-kynurenine from L-tryptophan: step 1/2. Functionally, heme-dependent dioxygenase that catalyzes the oxidative cleavage of the L-tryptophan (L-Trp) pyrrole ring and converts L-tryptophan to N-formyl-L-kynurenine. Catalyzes the oxidative cleavage of the indole moiety. The chain is Tryptophan 2,3-dioxygenase 1 from Ralstonia nicotianae (strain ATCC BAA-1114 / GMI1000) (Ralstonia solanacearum).